The primary structure comprises 263 residues: Indole-3-glycerol phosphate synthase (263 aa).

Belongs to the TrpC family.

It carries out the reaction 1-(2-carboxyphenylamino)-1-deoxy-D-ribulose 5-phosphate + H(+) = (1S,2R)-1-C-(indol-3-yl)glycerol 3-phosphate + CO2 + H2O. It functions in the pathway amino-acid biosynthesis; L-tryptophan biosynthesis; L-tryptophan from chorismate: step 4/5. In Rhodospirillum rubrum (strain ATCC 11170 / ATH 1.1.1 / DSM 467 / LMG 4362 / NCIMB 8255 / S1), this protein is Indole-3-glycerol phosphate synthase.